A 176-amino-acid polypeptide reads, in one-letter code: Shikimate kinase (176 aa).

14–19 (GAGKST) contacts ATP. Residue serine 18 participates in Mg(2+) binding. Substrate contacts are provided by aspartate 36, arginine 60, and glycine 83. An ATP-binding site is contributed by arginine 121. Arginine 140 contributes to the substrate binding site.

This sequence belongs to the shikimate kinase family. Monomer. It depends on Mg(2+) as a cofactor.

It is found in the cytoplasm. The enzyme catalyses shikimate + ATP = 3-phosphoshikimate + ADP + H(+). The protein operates within metabolic intermediate biosynthesis; chorismate biosynthesis; chorismate from D-erythrose 4-phosphate and phosphoenolpyruvate: step 5/7. In terms of biological role, catalyzes the specific phosphorylation of the 3-hydroxyl group of shikimic acid using ATP as a cosubstrate. The polypeptide is Shikimate kinase (Francisella philomiragia subsp. philomiragia (strain ATCC 25017 / CCUG 19701 / FSC 153 / O#319-036)).